A 172-amino-acid polypeptide reads, in one-letter code: NADH-quinone oxidoreductase subunit B (172 aa).

[4Fe-4S] cluster is bound by residues C46, C47, C111, and C141.

Belongs to the complex I 20 kDa subunit family. In terms of assembly, NDH-1 is composed of 14 different subunits. Subunits NuoB, C, D, E, F, and G constitute the peripheral sector of the complex. It depends on [4Fe-4S] cluster as a cofactor.

The protein localises to the cell membrane. The enzyme catalyses a quinone + NADH + 5 H(+)(in) = a quinol + NAD(+) + 4 H(+)(out). Its function is as follows. NDH-1 shuttles electrons from NADH, via FMN and iron-sulfur (Fe-S) centers, to quinones in the respiratory chain. The immediate electron acceptor for the enzyme in this species is believed to be a menaquinone. Couples the redox reaction to proton translocation (for every two electrons transferred, four hydrogen ions are translocated across the cytoplasmic membrane), and thus conserves the redox energy in a proton gradient. In Brevibacillus brevis (strain 47 / JCM 6285 / NBRC 100599), this protein is NADH-quinone oxidoreductase subunit B.